The chain runs to 171 residues: Ribosome maturation factor RimM (171 aa).

The region spanning 97–169 (DGEFYYHEII…RVDVDIMEGL (73 aa)) is the PRC barrel domain.

Belongs to the RimM family. Binds ribosomal protein uS19.

It localises to the cytoplasm. An accessory protein needed during the final step in the assembly of 30S ribosomal subunit, possibly for assembly of the head region. Essential for efficient processing of 16S rRNA. May be needed both before and after RbfA during the maturation of 16S rRNA. It has affinity for free ribosomal 30S subunits but not for 70S ribosomes. The sequence is that of Ribosome maturation factor RimM from Lactococcus lactis subsp. cremoris (strain SK11).